The primary structure comprises 248 residues: Sperm-specific protein Don juan (248 aa).

The stretch at 82–147 (KEGNQDELEN…EKKTKCAKKD (66 aa)) forms a coiled coil. The interval 146-200 (KDPCKKKDPCKKKDPCKKKDPCKKKDPCKKKDPCKKKDPCKKKDPCKKKGGDLKK) is disordered. A run of 8 repeats spans residues 147–152 (DPCKKK), 153–158 (DPCKKK), 159–164 (DPCKKK), 165–170 (DPCKKK), 171–176 (DPCKKK), 177–182 (DPCKKK), 183–188 (DPCKKK), and 189–194 (DPCKKK). An 8 X 6 AA tandem repeat of D-P-C-K-K-K region spans residues 147-194 (DPCKKKDPCKKKDPCKKKDPCKKKDPCKKKDPCKKKDPCKKKDPCKKK). Residues 197-244 (DLKKKCKKLAEKEKCKKLAKKEKMKKLQKKCKKMAQKEKCKKMAKKDK) are a coiled coil.

As to expression, expression limited to post-meiotic male germ cells. Expressed in elongated spermatids during individualization and in finally elongated nuclei of spermatids. After completion of nuclear shaping it is no longer expressed in the sperm heads with the onset of individualization.

The protein localises to the nucleus. Its subcellular location is the mitochondrion. Its function is as follows. May be involved in the final steps of mitochondrial differentiation within the flagellum. This Drosophila melanogaster (Fruit fly) protein is Sperm-specific protein Don juan (dj).